A 363-amino-acid polypeptide reads, in one-letter code: ADP-ribosylhydrolase ARH3 (363 aa).

Glu41 serves as a coordination point for Mg(2+). A Phosphothreonine modification is found at Thr64. Residues Thr76, Asp77, and Asp78 each coordinate Mg(2+). Asp77 is a substrate binding site. Residues 146–152 (KGSYGNG), His182, Leu235, and Ile271 each bind substrate. Residues Asp314, Asp316, and Thr317 each coordinate Mg(2+).

The protein belongs to the ADP-ribosylglycohydrolase family. In terms of assembly, monomer. It depends on Mg(2+) as a cofactor. Ubiquitous. Expressed in skin fibroblasts.

The protein localises to the nucleus. It localises to the cytoplasm. Its subcellular location is the chromosome. The protein resides in the mitochondrion matrix. The catalysed reaction is [(1''-&gt;2')-ADP-alpha-D-ribose](n) + H2O = [(1''-&gt;2')-ADP-alpha-D-ribose](n-1) + ADP-D-ribose. It catalyses the reaction 1''-O-acetyl-ADP-alpha-D-ribose + H2O = ADP-D-ribose + acetate + H(+). It carries out the reaction O-(ADP-D-ribosyl)-L-seryl-[protein] + H2O = ADP-D-ribose + L-seryl-[protein]. The enzyme catalyses alpha-NAD(+) + H2O = ADP-D-ribose + nicotinamide + H(+). With respect to regulation, the protein undergoes a dramatic conformational switch from closed to open states upon substrate-binding, which enables specific substrate recognition for the 1''-O-linkage. The glutamate flap (Glu-41) blocks substrate entrance to Mg(2+) in the unliganded closed state. In presence of substrate, Glu-41 is ejected from the active site: this closed-to-open transition significantly widens the substrate-binding channel and precisely positions the scissile 1''-O-linkage for cleavage while securing tightly 2'- and 3'-hydroxyls of ADP-ribose. In terms of biological role, ADP-ribosylhydrolase that preferentially hydrolyzes the scissile alpha-O-linkage attached to the anomeric C1'' position of ADP-ribose and acts on different substrates, such as proteins ADP-ribosylated on serine and threonine, free poly(ADP-ribose) and O-acetyl-ADP-D-ribose. Specifically acts as a serine mono-ADP-ribosylhydrolase by mediating the removal of mono-ADP-ribose attached to serine residues on proteins, thereby playing a key role in DNA damage response. Serine ADP-ribosylation of proteins constitutes the primary form of ADP-ribosylation of proteins in response to DNA damage. Does not hydrolyze ADP-ribosyl-arginine, -cysteine, -diphthamide, or -asparagine bonds. Also able to degrade protein free poly(ADP-ribose), which is synthesized in response to DNA damage: free poly(ADP-ribose) acts as a potent cell death signal and its degradation by ADPRHL2 protects cells from poly(ADP-ribose)-dependent cell death, a process named parthanatos. Also hydrolyzes free poly(ADP-ribose) in mitochondria. Specifically digests O-acetyl-ADP-D-ribose, a product of deacetylation reactions catalyzed by sirtuins. Specifically degrades 1''-O-acetyl-ADP-D-ribose isomer, rather than 2''-O-acetyl-ADP-D-ribose or 3''-O-acetyl-ADP-D-ribose isomers. This chain is ADP-ribosylhydrolase ARH3, found in Homo sapiens (Human).